Consider the following 123-residue polypeptide: Large ribosomal subunit protein bL21 (123 aa).

Belongs to the bacterial ribosomal protein bL21 family. In terms of assembly, part of the 50S ribosomal subunit. Contacts protein L20.

Its function is as follows. This protein binds to 23S rRNA in the presence of protein L20. This Sinorhizobium fredii (strain NBRC 101917 / NGR234) protein is Large ribosomal subunit protein bL21.